Reading from the N-terminus, the 240-residue chain is Phosphoribosylaminoimidazole-succinocarboxamide synthase (240 aa).

The protein belongs to the SAICAR synthetase family.

It carries out the reaction 5-amino-1-(5-phospho-D-ribosyl)imidazole-4-carboxylate + L-aspartate + ATP = (2S)-2-[5-amino-1-(5-phospho-beta-D-ribosyl)imidazole-4-carboxamido]succinate + ADP + phosphate + 2 H(+). Its pathway is purine metabolism; IMP biosynthesis via de novo pathway; 5-amino-1-(5-phospho-D-ribosyl)imidazole-4-carboxamide from 5-amino-1-(5-phospho-D-ribosyl)imidazole-4-carboxylate: step 1/2. This Wolbachia sp. subsp. Drosophila simulans (strain wRi) protein is Phosphoribosylaminoimidazole-succinocarboxamide synthase.